A 418-amino-acid chain; its full sequence is Nucleoside permease NupG (418 aa).

Over 1 to 4 (MNLK) the chain is Cytoplasmic. The chain crosses the membrane as a helical span at residues 5–29 (LQLKILSFLQFCLWGSWLTTLGSYM). Residues 30-36 (FVTLKFD) are Periplasmic-facing. A helical membrane pass occupies residues 37–58 (GASIGAVYSSLGIAAVFMPALL). The Cytoplasmic segment spans residues 59-67 (GIVADKWLS). The chain crosses the membrane as a helical span at residues 68–88 (AKWVYAICHTIGAITLFMAAQ). Topologically, residues 89–91 (VTT) are periplasmic. A helical membrane pass occupies residues 92-113 (PEAMFLVILINSFAYMPTLGLI). Topologically, residues 114-135 (NTISYYRLQNAGMDIVTDFPPI) are cytoplasmic. The helical transmembrane segment at 136–156 (RIWGTIGFIMAMWVVSLSGFE) threads the bilayer. Residues 157–158 (LS) are Periplasmic-facing. The helical transmembrane segment at 159–178 (HMQLYIGAALSAILVLFTLT) threads the bilayer. Residues 179-209 (LPHIPVAKQQANQSWTTLLGLDAFALFKNKR) lie on the Cytoplasmic side of the membrane. Residues 210–236 (MAIFFIFSMLLGAELQITNMFGNTFLH) form a helical membrane-spanning segment. Residues 237–247 (SFDKDPMFASS) are Periplasmic-facing. Residues 248–268 (FIVQHASIIMSISQISETLFI) form a helical membrane-spanning segment. Residues 269–280 (LTIPFFLSRYGI) lie on the Cytoplasmic side of the membrane. The helical transmembrane segment at 281 to 300 (KNVMMISIVAWILRFALFAY) threads the bilayer. Over 301-305 (GDPTP) the chain is Periplasmic. Residues 306–326 (FGTVLLVLSMIVYGCAFDFFN) form a helical membrane-spanning segment. The Cytoplasmic portion of the chain corresponds to 327–346 (ISGSVFVEKEVSPAIRASAQ). The helical transmembrane segment at 347–369 (GMFLMMTNGFGCILGGIVSGKVV) threads the bilayer. The Periplasmic segment spans residues 370–379 (EMYTQNGITD). Residues 380–403 (WQTVWLIFAGYSVVLAFAFMAMFK) form a helical membrane-spanning segment. Residues 404–418 (YKHVRVPTGTQTVSH) are Cytoplasmic-facing.

It belongs to the major facilitator superfamily. Nucleoside:H(+) symporter (NHS) (TC 2.A.1.10) family.

It is found in the cell inner membrane. The catalysed reaction is adenosine(in) + H(+)(in) = adenosine(out) + H(+)(out). It catalyses the reaction uridine(in) + H(+)(in) = uridine(out) + H(+)(out). It carries out the reaction thymidine(in) + H(+)(in) = thymidine(out) + H(+)(out). The enzyme catalyses cytidine(in) + H(+)(in) = cytidine(out) + H(+)(out). The catalysed reaction is 2'-deoxycytidine(in) + H(+)(in) = 2'-deoxycytidine(out) + H(+)(out). It catalyses the reaction guanosine(in) + H(+)(in) = guanosine(out) + H(+)(out). It carries out the reaction inosine(in) + H(+)(in) = inosine(out) + H(+)(out). Inhibited by the protonophore uncouplers 2,4-dinitrophenol and carbonyl cyanide m-chlorophenylhydrazone (CCCP), and by valinomycin. Inhibited by the nucleoside antibiotic showdomycin. Functionally, broad-specificity transporter of purine and pyrimidine nucleosides. Can transport adenosine, uridine, thymidine, cytidine, deoxycytidine, guanosine and inosine. Can also transport xanthosine, but with a very low affinity. Transport is driven by a proton motive force. This Escherichia coli (strain K12) protein is Nucleoside permease NupG.